We begin with the raw amino-acid sequence, 472 residues long: 3-isopropylmalate dehydratase large subunit (472 aa).

Residues C346, C406, and C409 each contribute to the [4Fe-4S] cluster site.

This sequence belongs to the aconitase/IPM isomerase family. LeuC type 1 subfamily. Heterodimer of LeuC and LeuD. [4Fe-4S] cluster is required as a cofactor.

The catalysed reaction is (2R,3S)-3-isopropylmalate = (2S)-2-isopropylmalate. It participates in amino-acid biosynthesis; L-leucine biosynthesis; L-leucine from 3-methyl-2-oxobutanoate: step 2/4. Catalyzes the isomerization between 2-isopropylmalate and 3-isopropylmalate, via the formation of 2-isopropylmaleate. The protein is 3-isopropylmalate dehydratase large subunit of Thermus thermophilus (strain ATCC BAA-163 / DSM 7039 / HB27).